A 470-amino-acid chain; its full sequence is Probable citrate synthase, mitochondrial (470 aa).

Residues His297, His351, and Asp406 contribute to the active site.

It belongs to the citrate synthase family. Homodimer.

Its subcellular location is the mitochondrion matrix. It catalyses the reaction oxaloacetate + acetyl-CoA + H2O = citrate + CoA + H(+). The protein operates within carbohydrate metabolism; tricarboxylic acid cycle; isocitrate from oxaloacetate: step 1/2. In Leishmania major, this protein is Probable citrate synthase, mitochondrial.